Reading from the N-terminus, the 539-residue chain is Monocarboxylate transporter 8 (539 aa).

Residues 1 to 92 (MALQSQASEE…VETRGTARGF (92 aa)) form a disordered region. At Ala2 the chain carries N-acetylalanine. Topologically, residues 2–96 (ALQSQASEEA…GTARGFQPPE (95 aa)) are cytoplasmic. A compositionally biased stretch (acidic residues) spans 31 to 41 (PESEPEPEPEP). Residues 42–64 (EPVPVPPPEPQPEPQPLPDPAPL) are compositionally biased toward pro residues. Residues 97–117 (GGFGWVVVFAATWCNGSIFGI) traverse the membrane as a helical segment. At 118–143 (HNSVGILYSMLLEEEKEKNRQVEFQA) the chain is on the extracellular side. Residues 144 to 164 (AWVGALAMGMIFFCSPIVSIF) traverse the membrane as a helical segment. Residues 165–171 (TDRLGCR) are Cytoplasmic-facing. A helical transmembrane segment spans residues 172–192 (ITATAGAAVAFIGLHTSSFTS). The Extracellular segment spans residues 193–200 (SLSLRYFT). The helical transmembrane segment at 201-221 (YGILFGCGCSFAFQPSLVILG) threads the bilayer. Over 222-229 (HYFQRRLG) the chain is Cytoplasmic. A helical membrane pass occupies residues 230 to 250 (LANGVVSAGSSIFSMSFPFLI). The Extracellular portion of the chain corresponds to 251-258 (RMLGDKIK). The chain crosses the membrane as a helical span at residues 259-279 (LAQTFQVLSTFMFVLMLLSLT). Residues 280–322 (YRPLLPSSQDTPSKRGVRTLHQRFLAQLRKYFNMRVFRQRTYR) lie on the Cytoplasmic side of the membrane. The helical transmembrane segment at 323–343 (IWAFGIAAAALGYFVPYVHLM) threads the bilayer. Residues 344 to 356 (KYVEEEFSEIKET) lie on the Extracellular side of the membrane. Residues 357 to 377 (WVLLVCIGATSGLGRLVSGHI) traverse the membrane as a helical segment. Over 378-386 (SDSIPGLKK) the chain is Cytoplasmic. Residues 387-407 (IYLQVLSFLLLGLMSMMIPLC) form a helical membrane-spanning segment. Residues 408–409 (RD) are Extracellular-facing. Residues 410-430 (FGGLIVVCLFLGLCDGFFITI) form a helical membrane-spanning segment. Topologically, residues 431–447 (MAPIAFELVGPMQASQA) are cytoplasmic. A helical transmembrane segment spans residues 448–468 (IGYLLGMMALPMIAGPPIAGL). The Extracellular portion of the chain corresponds to 469–477 (LRNCFGDYH). Residues 478 to 498 (VAFYFAGVPPIIGAVILFFVP) form a helical membrane-spanning segment. Over 499–539 (LMHQRMFKKEQRDSSKDKMLAPDPDPNGELLPGSPNPEEPI) the chain is Cytoplasmic. The segment covering 508–518 (EQRDSSKDKML) has biased composition (basic and acidic residues). The tract at residues 508–539 (EQRDSSKDKMLAPDPDPNGELLPGSPNPEEPI) is disordered.

Belongs to the major facilitator superfamily. Monocarboxylate porter (TC 2.A.1.13) family. In terms of assembly, monomer. Homodimer. Homooligomer. As to expression, highly expressed in liver and heart. In adult brain tissue expression is largely confined to endothelial cells of the blood-brain barrier (at protein level).

Its subcellular location is the cell membrane. It is found in the apical cell membrane. The enzyme catalyses 3,3',5-triiodo-L-thyronine(out) = 3,3',5-triiodo-L-thyronine(in). It carries out the reaction L-thyroxine(out) = L-thyroxine(in). The catalysed reaction is 3,3',5'-triiodo-L-thyronine(out) = 3,3',5'-triiodo-L-thyronine(in). It catalyses the reaction 3,3'-diiodo-L-thyronine(out) = 3,3'-diiodo-L-thyronine(in). Its function is as follows. Specific thyroid hormone transmembrane transporter, that mediates both uptake and efflux of thyroid hormones across the cell membrane independently of pH or a Na(+) gradient. Major substrates are the iodothyronines T3 and T4 and to a lesser extent rT3 and 3,3-diiodothyronine (3,3'-T2). Acts as an important mediator of thyroid hormone transport, especially T3, through the blood-brain barrier. In Homo sapiens (Human), this protein is Monocarboxylate transporter 8 (SLC16A2).